A 401-amino-acid chain; its full sequence is Phosphoglycerate kinase (401 aa).

Substrate is bound by residues 24–26 (DFN), Arg-40, 63–66 (HFGR), Arg-122, and Arg-155. ATP-binding positions include Lys-206, Gly-297, Glu-328, and 357–360 (GGDS).

The protein belongs to the phosphoglycerate kinase family. In terms of assembly, monomer.

It is found in the cytoplasm. The enzyme catalyses (2R)-3-phosphoglycerate + ATP = (2R)-3-phospho-glyceroyl phosphate + ADP. It participates in carbohydrate degradation; glycolysis; pyruvate from D-glyceraldehyde 3-phosphate: step 2/5. This Synechococcus sp. (strain CC9605) protein is Phosphoglycerate kinase.